Reading from the N-terminus, the 98-residue chain is Mu-type opioid receptor (98 aa).

Residues 1–9 lie on the Cytoplasmic side of the membrane; it reads YTKMKTATN. Residues 10–34 traverse the membrane as a helical segment; it reads IYIFNLALADALATSTLPFQSVNYL. The Extracellular portion of the chain corresponds to 35-45; the sequence is MGTWPFGTILC. The chain crosses the membrane as a helical span at residues 46 to 68; that stretch reads KIVISIDYYNMFTSIFTLCTMSV. Residues 69–88 lie on the Cytoplasmic side of the membrane; that stretch reads DRYIAVCHPVKALDFRTPRN. Tyr-71 is modified (phosphotyrosine). Residues 89–98 traverse the membrane as a helical segment; the sequence is AKTVNVCNWI.

This sequence belongs to the G-protein coupled receptor 1 family. Forms homooligomers and heterooligomers with other GPCRs, such as OPRD1, OPRK1, OPRL1, NPFFR2, ADRA2A, SSTR2, CNR1 and CCR5 (probably in dimeric forms). Interacts with heterotrimeric G proteins; interaction with a heterotrimeric complex containing GNAI1, GNB1 and GNG2 stabilizes the active conformation of the receptor and increases its affinity for endomorphin-2, the synthetic opioid peptide DAMGO and for morphinan agonists. Interacts with PPL; the interaction disrupts agonist-mediated G-protein activation. Interacts (via C-terminus) with DNAJB4 (via C-terminus). Interacts with calmodulin; the interaction inhibits the constitutive activity of OPRM1; it abolishes basal and attenuates agonist-stimulated G-protein coupling. Interacts with FLNA, PLD2, RANBP9 and WLS and GPM6A. Interacts with RTP4. Interacts with SYP and GNAS. Interacts with RGS9, RGS17, RGS20, RGS4, PPP1R9B and HINT1. Phosphorylated. Differentially phosphorylated in basal and agonist-induced conditions. Agonist-mediated phosphorylation modulates receptor internalization. Phosphorylated by GRK2 in a agonist-dependent manner. Phosphorylated on tyrosine residues; the phosphorylation is involved in agonist-induced G-protein-independent receptor down-regulation. In terms of processing, phosphorylated. Differentially phosphorylated in basal and agonist-induced conditions. Agonist-mediated phosphorylation modulates receptor internalization. Phosphorylated by GRK2 in a agonist-dependent manner. Phosphorylated on tyrosine residues; the phosphorylation is involved in agonist-induced G-protein-independent receptor down-regulation. Post-translationally, ubiquitinated. A basal ubiquitination seems not to be related to degradation. Ubiquitination is increased upon formation of OPRM1:OPRD1 oligomers leading to proteasomal degradation; the ubiquitination is diminished by RTP4.

The protein localises to the cell membrane. Its subcellular location is the cell projection. It is found in the axon. It localises to the perikaryon. The protein resides in the dendrite. The protein localises to the endosome. Receptor for endogenous opioids such as beta-endorphin and endomorphin. Receptor for natural and synthetic opioids including morphine, heroin, DAMGO, fentanyl, etorphine, buprenorphin and methadone. Also activated by enkephalin peptides, such as Met-enkephalin or Met-enkephalin-Arg-Phe, with higher affinity for Met-enkephalin-Arg-Phe. Agonist binding to the receptor induces coupling to an inactive GDP-bound heterotrimeric G-protein complex and subsequent exchange of GDP for GTP in the G-protein alpha subunit leading to dissociation of the G-protein complex with the free GTP-bound G-protein alpha and the G-protein beta-gamma dimer activating downstream cellular effectors. The agonist- and cell type-specific activity is predominantly coupled to pertussis toxin-sensitive G(i) and G(o) G alpha proteins, GNAI1, GNAI2, GNAI3 and GNAO1, and to a lesser extent to pertussis toxin-insensitive G alpha proteins GNAZ and GNA15. They mediate an array of downstream cellular responses, including inhibition of adenylate cyclase activity and both N-type and L-type calcium channels, activation of inward rectifying potassium channels, mitogen-activated protein kinase (MAPK), phospholipase C (PLC), phosphoinositide/protein kinase (PKC), phosphoinositide 3-kinase (PI3K) and regulation of NF-kappa-B. Also couples to adenylate cyclase stimulatory G alpha proteins. The selective temporal coupling to G-proteins and subsequent signaling can be regulated by RGSZ proteins, such as RGS9, RGS17 and RGS4. Phosphorylation by members of the GPRK subfamily of Ser/Thr protein kinases and association with beta-arrestins is involved in short-term receptor desensitization. Beta-arrestins associate with the GPRK-phosphorylated receptor and uncouple it from the G-protein thus terminating signal transduction. The phosphorylated receptor is internalized through endocytosis via clathrin-coated pits which involves beta-arrestins. The activation of the ERK pathway occurs either in a G-protein-dependent or a beta-arrestin-dependent manner and is regulated by agonist-specific receptor phosphorylation. Acts as a class A G-protein coupled receptor (GPCR) which dissociates from beta-arrestin at or near the plasma membrane and undergoes rapid recycling. Receptor down-regulation pathways are varying with the agonist and occur dependent or independent of G-protein coupling. Endogenous ligands induce rapid desensitization, endocytosis and recycling. Heterooligomerization with other GPCRs can modulate agonist binding, signaling and trafficking properties. Involved in neurogenesis. The chain is Mu-type opioid receptor (OPRM1) from Cavia porcellus (Guinea pig).